A 305-amino-acid chain; its full sequence is Putative ABC transporter molybdenum-binding protein HVO_B0369 (305 aa).

The tat-type signal signal peptide spans M1–A40.

This sequence belongs to the bacterial solute-binding protein 1 family. WtpA subfamily. In terms of assembly, the complex is composed of two ATP-binding proteins, two transmembrane proteins (HVO_B0370) and a solute-binding protein (HVO_B0369). Predicted to be exported by the Tat system. The position of the signal peptide cleavage has not been experimentally proven.

In terms of biological role, part of an ABC transporter complex involved in molybdenum import. This chain is Putative ABC transporter molybdenum-binding protein HVO_B0369, found in Haloferax volcanii (strain ATCC 29605 / DSM 3757 / JCM 8879 / NBRC 14742 / NCIMB 2012 / VKM B-1768 / DS2) (Halobacterium volcanii).